Here is a 388-residue protein sequence, read N- to C-terminus: Putative O-antigen polymerase (388 aa).

Helical transmembrane passes span Ile-23 to Ile-43, Leu-57 to Val-77, Val-97 to Ser-117, Asn-143 to Lys-163, Ile-180 to Ile-200, Val-215 to Leu-235, Ile-312 to Trp-332, Tyr-338 to His-358, and Phe-361 to Phe-381.

The protein resides in the cell inner membrane. Functionally, may function in vitro as a polymerase that catalyzes the polymerization of the O-antigen repeat units on the periplasmic face of the inner membrane, leading to the formation of the lipid-linked O-antigen molecule. However, E.coli K12 strains do not normally produce the O-antigen in vivo due to mutations in the rfb gene cluster. K12 strains are phenotypically rough, their lipopolysaccharide having a complete core structure, but no O-antigen. In Escherichia coli (strain K12), this protein is Putative O-antigen polymerase.